Here is a 101-residue protein sequence, read N- to C-terminus: Small ribosomal subunit protein uS10 (101 aa).

Belongs to the universal ribosomal protein uS10 family. Part of the 30S ribosomal subunit.

In terms of biological role, involved in the binding of tRNA to the ribosomes. The sequence is that of Small ribosomal subunit protein uS10 from Mycobacterium avium (strain 104).